The chain runs to 94 residues: PqqA binding protein (94 aa).

It belongs to the PqqD family. In terms of assembly, monomer. Interacts with PqqE.

The protein operates within cofactor biosynthesis; pyrroloquinoline quinone biosynthesis. Functions as a PqqA binding protein and presents PqqA to PqqE, in the pyrroloquinoline quinone (PQQ) biosynthetic pathway. The sequence is that of PqqA binding protein from Acinetobacter baumannii (strain AB307-0294).